A 517-amino-acid chain; its full sequence is 2,3-bisphosphoglycerate-independent phosphoglycerate mutase (517 aa).

Positions 14 and 64 each coordinate Mn(2+). Catalysis depends on S64, which acts as the Phosphoserine intermediate. Substrate-binding positions include H125, 155-156, R187, R193, 263-266, and K337; these read RD and RSDR. D404, H408, D445, H446, and H464 together coordinate Mn(2+).

The protein belongs to the BPG-independent phosphoglycerate mutase family. In terms of assembly, monomer. Requires Mn(2+) as cofactor.

It catalyses the reaction (2R)-2-phosphoglycerate = (2R)-3-phosphoglycerate. It participates in carbohydrate degradation; glycolysis; pyruvate from D-glyceraldehyde 3-phosphate: step 3/5. Catalyzes the interconversion of 2-phosphoglycerate and 3-phosphoglycerate. The polypeptide is 2,3-bisphosphoglycerate-independent phosphoglycerate mutase (Nitrosococcus oceani (strain ATCC 19707 / BCRC 17464 / JCM 30415 / NCIMB 11848 / C-107)).